The chain runs to 197 residues: RILP-like protein 2 (197 aa).

Residues 14-96 (EDEGALAKSP…KQEVEGLRRA (83 aa)) enclose the RH1 domain. A coiled-coil region spans residues 65–153 (LEALVNEGSL…VQEELQCYRS (89 aa)). One can recognise an RH2 domain in the interval 119 to 184 (RPRFTLQELR…GNGEKEERTI (66 aa)).

As to quaternary structure, homodimer. Interacts (via N-terminus) with MYO5A, the interaction is required for its role in dendrite formation. Interacts with RAC1. Interacts with RAB8A; interaction is dependent on the phosphorylation of RAB8A on 'Thr-72'. Interacts with RAB10 and RAB12; interaction is dependent on the phosphorylation of 'Thr-73' on RAB10 and 'Ser-105' on RAB12.

The protein resides in the cytoplasm. The protein localises to the cytosol. It is found in the cytoskeleton. It localises to the microtubule organizing center. Its subcellular location is the centrosome. The protein resides in the cell projection. The protein localises to the cilium. In terms of biological role, involved in cell shape and neuronal morphogenesis, positively regulating the establishment and maintenance of dendritic spines. Plays a role in cellular protein transport, including protein transport away from primary cilia. May function via activation of RAC1 and PAK1. This chain is RILP-like protein 2 (Rilpl2), found in Rattus norvegicus (Rat).